The primary structure comprises 144 residues: 3-hydroxyacyl-[acyl-carrier-protein] dehydratase FabZ (144 aa).

Residue H51 is part of the active site.

This sequence belongs to the thioester dehydratase family. FabZ subfamily.

It is found in the cytoplasm. It carries out the reaction a (3R)-hydroxyacyl-[ACP] = a (2E)-enoyl-[ACP] + H2O. Functionally, involved in unsaturated fatty acids biosynthesis. Catalyzes the dehydration of short chain beta-hydroxyacyl-ACPs and long chain saturated and unsaturated beta-hydroxyacyl-ACPs. The polypeptide is 3-hydroxyacyl-[acyl-carrier-protein] dehydratase FabZ (Clostridium botulinum (strain Okra / Type B1)).